An 81-amino-acid polypeptide reads, in one-letter code: MLAGMPSLSHLEQQEAADRIHLLMEQGMSSGEAIARVAQEIREKHQGDQVSVMFDDEDDDEEYQERPDDQADDDSEEDENY.

The tract at residues Glu43–Tyr81 is disordered. 2 stretches are compositionally biased toward acidic residues: residues Phe54 to Tyr63 and Gln70 to Tyr81.

The protein belongs to the UPF0181 family.

This is UPF0181 protein Spro_2806 from Serratia proteamaculans (strain 568).